The primary structure comprises 434 residues: 4-hydroxy-3-methylbut-2-en-1-yl diphosphate synthase (flavodoxin) (434 aa).

Residues 1 to 15 show a composition bias toward polar residues; it reads MQSEAQSPRSSQICS. Positions 1–24 are disordered; it reads MQSEAQSPRSSQICSTEPVFGGHQ. 4 residues coordinate [4Fe-4S] cluster: cysteine 322, cysteine 325, cysteine 368, and glutamate 375.

Belongs to the IspG family. The cofactor is [4Fe-4S] cluster.

The enzyme catalyses (2E)-4-hydroxy-3-methylbut-2-enyl diphosphate + oxidized [flavodoxin] + H2O + 2 H(+) = 2-C-methyl-D-erythritol 2,4-cyclic diphosphate + reduced [flavodoxin]. It participates in isoprenoid biosynthesis; isopentenyl diphosphate biosynthesis via DXP pathway; isopentenyl diphosphate from 1-deoxy-D-xylulose 5-phosphate: step 5/6. In terms of biological role, converts 2C-methyl-D-erythritol 2,4-cyclodiphosphate (ME-2,4cPP) into 1-hydroxy-2-methyl-2-(E)-butenyl 4-diphosphate. In Burkholderia ambifaria (strain MC40-6), this protein is 4-hydroxy-3-methylbut-2-en-1-yl diphosphate synthase (flavodoxin).